Reading from the N-terminus, the 259-residue chain is Thiazole synthase (259 aa).

The active-site Schiff-base intermediate with DXP is the K102. Residues G163, 189 to 190, and 211 to 212 each bind 1-deoxy-D-xylulose 5-phosphate; these read AG and NT.

It belongs to the ThiG family. As to quaternary structure, homotetramer. Forms heterodimers with either ThiH or ThiS.

It is found in the cytoplasm. It carries out the reaction [ThiS sulfur-carrier protein]-C-terminal-Gly-aminoethanethioate + 2-iminoacetate + 1-deoxy-D-xylulose 5-phosphate = [ThiS sulfur-carrier protein]-C-terminal Gly-Gly + 2-[(2R,5Z)-2-carboxy-4-methylthiazol-5(2H)-ylidene]ethyl phosphate + 2 H2O + H(+). The protein operates within cofactor biosynthesis; thiamine diphosphate biosynthesis. Catalyzes the rearrangement of 1-deoxy-D-xylulose 5-phosphate (DXP) to produce the thiazole phosphate moiety of thiamine. Sulfur is provided by the thiocarboxylate moiety of the carrier protein ThiS. In vitro, sulfur can be provided by H(2)S. This Novosphingobium aromaticivorans (strain ATCC 700278 / DSM 12444 / CCUG 56034 / CIP 105152 / NBRC 16084 / F199) protein is Thiazole synthase.